Reading from the N-terminus, the 744-residue chain is Tripartite motif-containing protein 3 (744 aa).

An N-acetylalanine modification is found at A2. An interaction with KIF21B region spans residues A2–P290. S7 is modified (phosphoserine). The segment at C22–R63 adopts an RING-type zinc-finger fold. Residues G110–L151 form a B box-type zinc finger. The Zn(2+) site is built by C115, H118, C138, and H143. A coiled-coil region spans residues D153–E224. One copy of the Filamin repeat lies at T317–A418. The segment at R420–K462 is disordered. At S427 the chain carries Phosphoserine. NHL repeat units lie at residues V473–E516, K520–E563, G564–N605, V609–D652, L656–S699, and G700–L743.

It belongs to the TRIM/RBCC family. Forms homooligomers. Interacts with TRIM2; this interaction reduces TRIM2 activity. Associates with myosin-Vb (MYO5B) and alpha-actinin-4 (ACTN4). Component of the CART complex, at least composed of ACTN4, HGS/HRS, MYO5B and TRIM3. Interacts with ZFYVE28/LST2. Interacts with KIF21B. Highly expressed in the brain, moderate levels in the lung, very low levels in the liver, kidney and heart. In the brain, expression was highest in the cerebellum. Expression in the brain is found at low levels at embryonic day 15 and then increases during the first two postnatal weeks before decreasing through adulthood.

Its subcellular location is the cytoplasm. The protein resides in the early endosome. It localises to the golgi apparatus. It is found in the trans-Golgi network. The protein localises to the cell projection. Its subcellular location is the dendrite. The catalysed reaction is S-ubiquitinyl-[E2 ubiquitin-conjugating enzyme]-L-cysteine + [acceptor protein]-L-lysine = [E2 ubiquitin-conjugating enzyme]-L-cysteine + N(6)-ubiquitinyl-[acceptor protein]-L-lysine.. E3 ubiquitin ligase that plays essential roles in neuronal functions such as regulation of neuronal plasticity, learning, and memory. In addition to its neuronal functions, participates in other biological processes such as innate immunity or cell cycle regulation. Component of the cytoskeleton-associated recycling or transport complex in neurons, polyubiquitinates gamma-actin, thus regulating neuronal plasticity, learning, and memory. Ubiquitinates postsynaptic scaffold GKAP, a neuronal substrate involved in synaptic remodeling and thereby modulates dendritic spine morphology. Positively regulates motility of microtubule-dependent motor protein KIF21B. Induces growth arrest via its RING-dependent E3 ligase activity and ubiquinates CDKN1A. Positively regulates TLR3-mediated signaling by mediating 'Lys-63'-linked polyubiquitination of TLR3. In turn, promotes the recognition and sorting of polyubiquitinated TLR3 by the ESCRT complexes. The chain is Tripartite motif-containing protein 3 (Trim3) from Rattus norvegicus (Rat).